Consider the following 799-residue polypeptide: High affinity nerve growth factor receptor (799 aa).

The signal sequence occupies residues 1-33 (MLRGQRLGQLGWHRPAAGLGSLMTSLMLACASA). Residues 34-420 (ASCREVCCPV…VEKKDETPFG (387 aa)) are Extracellular-facing. Disulfide bonds link cysteine 36–cysteine 41 and cysteine 40–cysteine 50. N-linked (GlcNAc...) asparagine glycosylation occurs at asparagine 67. LRR repeat units follow at residues 90–113 (LGEL…AFRF) and 116–137 (RLSH…TVQG). N-linked (GlcNAc...) asparagine glycosylation is found at asparagine 121, asparagine 190, asparagine 204, asparagine 255, asparagine 264, asparagine 320, asparagine 325, asparagine 341, asparagine 361, and asparagine 404. Residues 148–219 (NPLHCSCALF…GDDVFLQCQV (72 aa)) form the LRRCT domain. A disulfide bond links cysteine 154 and cysteine 193. Ig-like C2-type domains lie at 196–285 (PTVK…VSVS) and 205–368 (DSVE…LAAN). Cystine bridges form between cysteine 217-cysteine 267 and cysteine 302-cysteine 348. A helical membrane pass occupies residues 421 to 441 (VSVAVGLAVSAALFLSALLLV). The Cytoplasmic portion of the chain corresponds to 442-799 (LNKCGQRSKF…APPSYLDVLG (358 aa)). Positions 472–493 (MTLGGSSLSPTEGKGSGLQGHI) are interaction with SQSTM1. Tyrosine 499 bears the Phosphotyrosine; by autocatalysis mark. The 272-residue stretch at 513-784 (IILKWELGEG…LSMKDVHARL (272 aa)) folds into the Protein kinase domain. Residues 519–527 (LGEGAFGKV) and lysine 547 contribute to the ATP site. The active-site Proton acceptor is the aspartate 653. A phosphotyrosine; by autocatalysis mark is found at tyrosine 679, tyrosine 683, tyrosine 684, and tyrosine 794.

The protein belongs to the protein kinase superfamily. Tyr protein kinase family. Insulin receptor subfamily. In terms of assembly, exists in a dynamic equilibrium between monomeric (low affinity) and dimeric (high affinity) structures. Homodimerization is induced by binding of a NGF dimer. Found in a complex, at least composed of KIDINS220, MAGI2, NTRK1 and RAPGEF2; the complex is mainly formed at late endosomes in a nerve growth factor (NGF)-dependent manner. Interacts with RAPGEF2; the interaction is strengthened after NGF stimulation. Interacts with SQSTM1; bridges NTRK1 to NGFR. Forms a ternary complex with NGFR and KIDINS220; this complex is affected by the expression levels of KIDINS220 and an increase in KIDINS220 expression leads to a decreased association of NGFR and NTRK1. Interacts (phosphorylated upon activation by NGF) with SHC1; mediates SHC1 phosphorylation and activation. Interacts (phosphorylated upon activation by NGF) with PLCG1; mediates PLCG1 phosphorylation and activation. Interacts (phosphorylated) with SH2B1 and SH2B2. Interacts with GRB2. Interacts with PIK3R1. Interacts with FRS2. Interacts with SORT1; may regulate NTRK1 anterograde axonal transport. Interacts with SH2D1A; regulates NTRK1. Interacts with NRADD. Interacts with RAB7A. Interacts with PTPRS. Interacts with USP36; USP36 does not deubiquitinate NTRK1. Interacts with GGA3. Interacts with TSPAN1; this interaction promotes NTRK1 stability. Ligand-mediated autophosphorylation. Interaction with SQSTM1 is phosphotyrosine-dependent. Autophosphorylation at Tyr-499 mediates interaction and phosphorylation of SHC1. In terms of processing, N-glycosylated. Post-translationally, ubiquitinated. Undergoes polyubiquitination upon activation; regulated by NGFR. Ubiquitination by NEDD4L leads to degradation. Ubiquitination regulates the internalization of the receptor.

It is found in the cell membrane. The protein localises to the early endosome membrane. Its subcellular location is the late endosome membrane. It localises to the recycling endosome membrane. It carries out the reaction L-tyrosyl-[protein] + ATP = O-phospho-L-tyrosyl-[protein] + ADP + H(+). With respect to regulation, the pro-survival signaling effect of NTRK1 in neurons requires its endocytosis into signaling early endosomes and its retrograde axonal transport. This is regulated by different proteins including CFL1, RAC1 and SORT1. NTF3 is unable to induce this signaling probably due to the lability of the NTF3-NTRK1 complex in endosomes. SH2D1A inhibits the autophosphorylation of the receptor, and alters the recruitment and activation of downstream effectors and signaling cascades. Regulated by NGFR. Functionally, receptor tyrosine kinase involved in the development and the maturation of the central and peripheral nervous systems through regulation of proliferation, differentiation and survival of sympathetic and nervous neurons. High affinity receptor for NGF which is its primary ligand, it can also bind and be activated by NTF3/neurotrophin-3. However, NTF3 only supports axonal extension through NTRK1 but has no effect on neuron survival. Upon dimeric NGF ligand-binding, undergoes homodimerization, autophosphorylation and activation. Recruits, phosphorylates and/or activates several downstream effectors including SHC1, FRS2, SH2B1, SH2B2 and PLCG1 that regulate distinct overlapping signaling cascades driving cell survival and differentiation. Through SHC1 and FRS2 activates a GRB2-Ras-MAPK cascade that regulates cell differentiation and survival. Through PLCG1 controls NF-Kappa-B activation and the transcription of genes involved in cell survival. Through SHC1 and SH2B1 controls a Ras-PI3 kinase-AKT1 signaling cascade that is also regulating survival. In absence of ligand and activation, may promote cell death, making the survival of neurons dependent on trophic factors. The chain is High affinity nerve growth factor receptor (Ntrk1) from Mus musculus (Mouse).